The primary structure comprises 865 residues: Chitin synthase 3 (865 aa).

The disordered stretch occupies residues 1–59 (MASQYPGHQLDDIPSTNVYRPPPRHEDDEAEHALLHQNSAYQSQYDDPHSRPLTPGQES). Basic and acidic residues predominate over residues 23–34 (PRHEDDEAEHAL). A compositionally biased stretch (polar residues) spans 36 to 45 (HQNSAYQSQY). Residues Asn64, Asn95, and Asn538 are each glycosylated (N-linked (GlcNAc...) asparagine). The next 3 membrane-spanning stretches (helical) occupy residues 565–585 (FFLHIQMIYNIVSVLLSWFSL), 620–640 (IINTILQYLYLAFLLLQFILA), and 650–670 (VAYIISFCLFGLIQLYVIVLS). N-linked (GlcNAc...) asparagine glycosylation is present at Asn682. The next 3 membrane-spanning stretches (helical) occupy residues 707–727 (IVIIALAATFGLYFVASFLYM), 735–755 (SFAQYLLLMPSFINILMIYAF), and 837–857 (LVATWIFSNALLAVAITSDSL).

It belongs to the chitin synthase family. Class III subfamily.

Its subcellular location is the cell membrane. The enzyme catalyses [(1-&gt;4)-N-acetyl-beta-D-glucosaminyl](n) + UDP-N-acetyl-alpha-D-glucosamine = [(1-&gt;4)-N-acetyl-beta-D-glucosaminyl](n+1) + UDP + H(+). Its function is as follows. Polymerizes chitin, a structural polymer of the cell wall and septum, by transferring the sugar moiety of UDP-GlcNAc to the non-reducing end of the growing chitin polymer. Is not only stable at different pH, but is also able to tolerate a broad temperature range. With CHS2, plays an important role in virulence. The polypeptide is Chitin synthase 3 (Exophiala dermatitidis (strain ATCC 34100 / CBS 525.76 / NIH/UT8656) (Black yeast)).